The following is a 194-amino-acid chain: Mersacidin decarboxylase (194 aa).

H75 is a catalytic residue.

This sequence belongs to the HFCD (homooligomeric flavin containing Cys decarboxylase) superfamily. Homododecamer. The cofactor is FAD.

Its pathway is antibiotic biosynthesis; mersacidin biosynthesis. Functionally, catalyzes the oxidative decarboxylation of the C-terminal cysteine residue of mersacidin to an aminoenethiol residue. This chain is Mersacidin decarboxylase (mrsD), found in Bacillus sp. (strain HIL-Y85/54728).